Here is a 326-residue protein sequence, read N- to C-terminus: Probable UDP-3-O-acyl-N-acetylglucosamine deacetylase 2, mitochondrial (326 aa).

The transit peptide at 1–21 (MRLPVTVKATKPSFLVIWIRY) directs the protein to the mitochondrion. Residues His-109, His-281, and Asp-285 each coordinate Zn(2+).

This sequence belongs to the LpxC family. Zn(2+) is required as a cofactor.

It localises to the mitochondrion. It catalyses the reaction a UDP-3-O-[(3R)-3-hydroxyacyl]-N-acetyl-alpha-D-glucosamine + H2O = a UDP-3-O-[(3R)-3-hydroxyacyl]-alpha-D-glucosamine + acetate. The protein operates within glycolipid biosynthesis; lipid IV(A) biosynthesis; lipid IV(A) from (3R)-3-hydroxytetradecanoyl-[acyl-carrier-protein] and UDP-N-acetyl-alpha-D-glucosamine: step 2/6. Functionally, involved in the biosynthesis of lipid A, a phosphorylated glycolipid that in bacteria anchors the lipopolysaccharide to the outer membrane of the cell. Lipid A-like molecules in plants may serve as structural components of the outer membranes of mitochondria and/or chloroplasts, or may be involved in signal transduction or plant defense responses (Potential). The sequence is that of Probable UDP-3-O-acyl-N-acetylglucosamine deacetylase 2, mitochondrial (LPXC2) from Arabidopsis thaliana (Mouse-ear cress).